The sequence spans 95 residues: Large ribosomal subunit protein bL25 (95 aa).

The protein belongs to the bacterial ribosomal protein bL25 family. As to quaternary structure, part of the 50S ribosomal subunit; part of the 5S rRNA/L5/L18/L25 subcomplex. Contacts the 5S rRNA. Binds to the 5S rRNA independently of L5 and L18.

Functionally, this is one of the proteins that binds to the 5S RNA in the ribosome where it forms part of the central protuberance. This chain is Large ribosomal subunit protein bL25, found in Buchnera aphidicola subsp. Acyrthosiphon pisum (strain 5A).